We begin with the raw amino-acid sequence, 260 residues long: Small ribosomal subunit protein uS3 (260 aa).

The region spanning 39-114 is the KH type-2 domain; it reads LRQYIEQKLG…QIRINVVEVQ (76 aa). Residues 218-260 are disordered; sequence QEVATPPPSPRDRDRDRGDRDREPRRRQQQRRRQQFEDRSNEG. Composition is skewed to basic and acidic residues over residues 227–243 and 251–260; these read PRDRDRDRGDRDREPRR and QQFEDRSNEG.

This sequence belongs to the universal ribosomal protein uS3 family. Part of the 30S ribosomal subunit. Forms a tight complex with proteins S10 and S14.

Its function is as follows. Binds the lower part of the 30S subunit head. Binds mRNA in the 70S ribosome, positioning it for translation. The protein is Small ribosomal subunit protein uS3 of Nostoc sp. (strain PCC 7120 / SAG 25.82 / UTEX 2576).